The sequence spans 109 residues: ATP-dependent Clp protease adapter protein ClpS (109 aa).

This sequence belongs to the ClpS family. As to quaternary structure, binds to the N-terminal domain of the chaperone ClpA.

Its function is as follows. Involved in the modulation of the specificity of the ClpAP-mediated ATP-dependent protein degradation. This chain is ATP-dependent Clp protease adapter protein ClpS, found in Lawsonia intracellularis (strain PHE/MN1-00).